We begin with the raw amino-acid sequence, 582 residues long: Phosphoribosylaminoimidazole carboxylase (582 aa).

The ATP-grasp domain occupies 114–305 (KKYLAERGVA…QFENHLRAIL (192 aa)). 143-200 (AGRLGLPLMLKAKTLAYDGRGNSPLKSASSEDIQASLKFLGDRPLYAEGWAPFVKEVA) is a binding site for ATP.

It in the C-terminal section; belongs to the AIR carboxylase family. Class I subfamily.

The enzyme catalyses 5-amino-1-(5-phospho-D-ribosyl)imidazole-4-carboxylate + H(+) = 5-amino-1-(5-phospho-beta-D-ribosyl)imidazole + CO2. Its pathway is purine metabolism; IMP biosynthesis via de novo pathway; 5-amino-1-(5-phospho-D-ribosyl)imidazole-4-carboxylate from 5-amino-1-(5-phospho-D-ribosyl)imidazole (carboxylase route): step 1/1. This chain is Phosphoribosylaminoimidazole carboxylase (ADE2), found in Cryptococcus neoformans var. neoformans serotype D (strain B-3501A) (Filobasidiella neoformans).